The primary structure comprises 321 residues: Leucine-rich repeat-containing protein 46 (321 aa).

LRR repeat units follow at residues 45–66, 67–88, 89–110, and 111–132; these read ELQT…EGLQ, NLHS…ACIP, SLRF…LDLP, and CLQF…EFPQ. The LRRCT domain occupies 142–184; the sequence is NSCTNQDGYRELVTEALPLLLDLDGQPVVERWISDEEDEASSD. Residues serine 175 and serine 182 each carry the phosphoserine modification. Residues 201-221 are a coiled coil; it reads LKELEQELSRHREHRQQTALT. Residues 235 to 321 form a disordered region; sequence DLPLLPGVPM…TKTTAKRSKK (87 aa).

It is found in the cell projection. The protein localises to the cilium. It localises to the flagellum. Required for normal spermatogenesis and male fertility. Plays an important role in sperm flagellum biogenesis. The chain is Leucine-rich repeat-containing protein 46 (LRRC46) from Homo sapiens (Human).